Here is a 95-residue protein sequence, read N- to C-terminus: Small ribosomal subunit protein bS6 (95 aa).

Belongs to the bacterial ribosomal protein bS6 family.

In terms of biological role, binds together with bS18 to 16S ribosomal RNA. The polypeptide is Small ribosomal subunit protein bS6 (Exiguobacterium sibiricum (strain DSM 17290 / CCUG 55495 / CIP 109462 / JCM 13490 / 255-15)).